A 722-amino-acid chain; its full sequence is Polyribonucleotide nucleotidyltransferase (722 aa).

2 residues coordinate Mg(2+): D487 and D493. The KH domain occupies 554–613; that stretch reads PRIETFKIPTDKIREVIGTGGKVIREIVEKTGAKVNIEDDGTVKVASSDGESIKAAIKWI. Residues 623–691 form the S1 motif domain; it reads GEIYEGTVVK…DRGKTRLSMK (69 aa). Positions 691-722 are disordered; it reads KVVDQDTGEDLEAKQKAEAKAEDEAPAQAAGE. The span at 701–713 shows a compositional bias: basic and acidic residues; the sequence is LEAKQKAEAKAED.

The protein belongs to the polyribonucleotide nucleotidyltransferase family. Mg(2+) serves as cofactor.

It is found in the cytoplasm. The enzyme catalyses RNA(n+1) + phosphate = RNA(n) + a ribonucleoside 5'-diphosphate. Involved in mRNA degradation. Catalyzes the phosphorolysis of single-stranded polyribonucleotides processively in the 3'- to 5'-direction. The polypeptide is Polyribonucleotide nucleotidyltransferase (Rhodopseudomonas palustris (strain BisB5)).